The primary structure comprises 155 residues: Small ribosomal subunit protein uS7 (155 aa).

The protein belongs to the universal ribosomal protein uS7 family. As to quaternary structure, part of the 30S ribosomal subunit. Contacts proteins S9 and S11.

One of the primary rRNA binding proteins, it binds directly to 16S rRNA where it nucleates assembly of the head domain of the 30S subunit. Is located at the subunit interface close to the decoding center, probably blocks exit of the E-site tRNA. This chain is Small ribosomal subunit protein uS7, found in Ureaplasma parvum serovar 3 (strain ATCC 27815 / 27 / NCTC 11736).